A 179-amino-acid chain; its full sequence is ATP synthase subunit b (179 aa).

Residues Ile-23–Pro-43 form a helical membrane-spanning segment.

This sequence belongs to the ATPase B chain family. F-type ATPases have 2 components, F(1) - the catalytic core - and F(0) - the membrane proton channel. F(1) has five subunits: alpha(3), beta(3), gamma(1), delta(1), epsilon(1). F(0) has three main subunits: a(1), b(2) and c(10-14). The alpha and beta chains form an alternating ring which encloses part of the gamma chain. F(1) is attached to F(0) by a central stalk formed by the gamma and epsilon chains, while a peripheral stalk is formed by the delta and b chains.

Its subcellular location is the cell membrane. In terms of biological role, f(1)F(0) ATP synthase produces ATP from ADP in the presence of a proton or sodium gradient. F-type ATPases consist of two structural domains, F(1) containing the extramembraneous catalytic core and F(0) containing the membrane proton channel, linked together by a central stalk and a peripheral stalk. During catalysis, ATP synthesis in the catalytic domain of F(1) is coupled via a rotary mechanism of the central stalk subunits to proton translocation. Functionally, component of the F(0) channel, it forms part of the peripheral stalk, linking F(1) to F(0). The polypeptide is ATP synthase subunit b (Salinispora arenicola (strain CNS-205)).